Here is a 1018-residue protein sequence, read N- to C-terminus: Integrator complex subunit 5 (1018 aa).

The tract at residues 1-26 (MSALCDPPGAPGPPGPAPATHGPAPL) is disordered. S2 bears the N-acetylserine mark. Residues 8–17 (PGAPGPPGPA) show a composition bias toward pro residues. The residue at position 278 (S278) is a Phosphoserine. Transmembrane regions (helical) follow at residues 533–553 (LATQ…PLAF), 855–875 (LLFE…YCSV), and 929–949 (VFSQ…WGFL).

This sequence belongs to the Integrator subunit 5 family. In terms of assembly, component of the Integrator complex, composed of core subunits INTS1, INTS2, INTS3, INTS4, INTS5, INTS6, INTS7, INTS8, INTS9/RC74, INTS10, INTS11/CPSF3L, INTS12, INTS13, INTS14 and INTS15. The core complex associates with protein phosphatase 2A subunits PPP2CA and PPP2R1A, to form the Integrator-PP2A (INTAC) complex.

It localises to the nucleus. The protein localises to the cytoplasm. The protein resides in the nucleus membrane. Component of the integrator complex, a multiprotein complex that terminates RNA polymerase II (Pol II) transcription in the promoter-proximal region of genes. The integrator complex provides a quality checkpoint during transcription elongation by driving premature transcription termination of transcripts that are unfavorably configured for transcriptional elongation: the complex terminates transcription by (1) catalyzing dephosphorylation of the C-terminal domain (CTD) of Pol II subunit POLR2A/RPB1 and SUPT5H/SPT5, (2) degrading the exiting nascent RNA transcript via endonuclease activity and (3) promoting the release of Pol II from bound DNA. The integrator complex is also involved in terminating the synthesis of non-coding Pol II transcripts, such as enhancer RNAs (eRNAs), small nuclear RNAs (snRNAs), telomerase RNAs and long non-coding RNAs (lncRNAs). Mediates recruitment of cytoplasmic dynein to the nuclear envelope, probably as component of the integrator complex. The polypeptide is Integrator complex subunit 5 (Ints5) (Mus musculus (Mouse)).